Here is a 258-residue protein sequence, read N- to C-terminus: MSSIDPRAIIDPSARLADDVVVGPWSIVGPDVEIGEGTVIGPHVVLKGPTVIGKHNRIYQFSSVGEDTPDLKYKGEPTRLVIGDHNTIREGVTIHRGTVQDRSETTIGDHNLIMAYAHIGHDSVIGNHCILVNNTALAGHVWVDDWAILSGYTLVHQFCRIGAHSFSGMGTAIGKDVPAYVTVFGNPAEARSMNFEGMRRRGFSAEAIAALRKAYKLVYRQGLTVEQALTELAESAAQFPEVAVFRDSIQASTRGITR.

Belongs to the transferase hexapeptide repeat family. LpxA subfamily. As to quaternary structure, homotrimer.

The protein localises to the cytoplasm. The catalysed reaction is a (3R)-hydroxyacyl-[ACP] + UDP-N-acetyl-alpha-D-glucosamine = a UDP-3-O-[(3R)-3-hydroxyacyl]-N-acetyl-alpha-D-glucosamine + holo-[ACP]. Its pathway is glycolipid biosynthesis; lipid IV(A) biosynthesis; lipid IV(A) from (3R)-3-hydroxytetradecanoyl-[acyl-carrier-protein] and UDP-N-acetyl-alpha-D-glucosamine: step 1/6. In terms of biological role, involved in the biosynthesis of lipid A, a phosphorylated glycolipid that anchors the lipopolysaccharide to the outer membrane of the cell. The sequence is that of Acyl-[acyl-carrier-protein]--UDP-N-acetylglucosamine O-acyltransferase from Ectopseudomonas mendocina (strain ymp) (Pseudomonas mendocina).